Reading from the N-terminus, the 127-residue chain is uncharacterized protein (127 aa).

This is an uncharacterized protein from Archaeoglobus fulgidus (strain ATCC 49558 / DSM 4304 / JCM 9628 / NBRC 100126 / VC-16).